Reading from the N-terminus, the 483-residue chain is Protein nucleotidyltransferase YdiU (483 aa).

The ATP site is built by Gly87, Gly89, Arg90, Lys110, Asp122, Gly123, Arg173, and Arg180. Residue Asp249 is the Proton acceptor of the active site. 2 residues coordinate Mg(2+): Asn250 and Asp259. Residue Asp259 participates in ATP binding.

It belongs to the SELO family. It depends on Mg(2+) as a cofactor. Mn(2+) serves as cofactor.

The enzyme catalyses L-seryl-[protein] + ATP = 3-O-(5'-adenylyl)-L-seryl-[protein] + diphosphate. It carries out the reaction L-threonyl-[protein] + ATP = 3-O-(5'-adenylyl)-L-threonyl-[protein] + diphosphate. It catalyses the reaction L-tyrosyl-[protein] + ATP = O-(5'-adenylyl)-L-tyrosyl-[protein] + diphosphate. The catalysed reaction is L-histidyl-[protein] + UTP = N(tele)-(5'-uridylyl)-L-histidyl-[protein] + diphosphate. The enzyme catalyses L-seryl-[protein] + UTP = O-(5'-uridylyl)-L-seryl-[protein] + diphosphate. It carries out the reaction L-tyrosyl-[protein] + UTP = O-(5'-uridylyl)-L-tyrosyl-[protein] + diphosphate. Nucleotidyltransferase involved in the post-translational modification of proteins. It can catalyze the addition of adenosine monophosphate (AMP) or uridine monophosphate (UMP) to a protein, resulting in modifications known as AMPylation and UMPylation. The polypeptide is Protein nucleotidyltransferase YdiU (Pelagibacter ubique (strain HTCC1062)).